The primary structure comprises 77 residues: MAIIKPGGHYIVPTKGEEISTFILENEGDELARCELNLNGNIQETLDILPHSTQTKMMDVRGKLTLCNIGKTHIKIL.

This is an uncharacterized protein from Dictyostelium discoideum (Social amoeba).